Reading from the N-terminus, the 458-residue chain is Flavonol 3-O-glucosyltransferase F3GT2 (458 aa).

His20 serves as the catalytic Proton acceptor. His20 lines the an anthocyanidin pocket. Asp119 (charge relay) is an active-site residue. A UDP-alpha-D-glucose-binding site is contributed by Thr141. His150 contacts an anthocyanidin. Residues Ala333, Gln335, His350, Trp353, Asn354, Ser355, and Glu358 each contribute to the UDP-alpha-D-glucose site. Position 373 (Gly373) interacts with an anthocyanidin. 2 residues coordinate UDP-alpha-D-glucose: Asp374 and Gln375.

It belongs to the UDP-glycosyltransferase family. Expressed in ovaries.

The catalysed reaction is a flavonol + UDP-alpha-D-glucose = a flavonol 3-O-beta-D-glucoside + UDP + H(+). The protein operates within flavonoid metabolism. Functionally, catalyzes the glucosylation of quercetin. Preferentially uses UDP-glucose as sugar donor, but is also able to use UDP-gal and UDP-xyl. Is probably not required for the accumulation of anthocyanin in red-fleshed kiwifruit varieties. In Actinidia chinensis var. chinensis (Chinese soft-hair kiwi), this protein is Flavonol 3-O-glucosyltransferase F3GT2.